The following is a 362-amino-acid chain: Phosphoserine aminotransferase (362 aa).

The L-glutamate site is built by serine 9 and arginine 42. Pyridoxal 5'-phosphate contacts are provided by residues glycine 76–arginine 77, tryptophan 102, threonine 153, aspartate 174, and glutamine 197. At lysine 198 the chain carries N6-(pyridoxal phosphate)lysine. Position 239 to 240 (asparagine 239 to threonine 240) interacts with pyridoxal 5'-phosphate.

This sequence belongs to the class-V pyridoxal-phosphate-dependent aminotransferase family. SerC subfamily. Homodimer. It depends on pyridoxal 5'-phosphate as a cofactor.

The protein resides in the cytoplasm. The enzyme catalyses O-phospho-L-serine + 2-oxoglutarate = 3-phosphooxypyruvate + L-glutamate. It catalyses the reaction 4-(phosphooxy)-L-threonine + 2-oxoglutarate = (R)-3-hydroxy-2-oxo-4-phosphooxybutanoate + L-glutamate. The protein operates within amino-acid biosynthesis; L-serine biosynthesis; L-serine from 3-phospho-D-glycerate: step 2/3. It functions in the pathway cofactor biosynthesis; pyridoxine 5'-phosphate biosynthesis; pyridoxine 5'-phosphate from D-erythrose 4-phosphate: step 3/5. Catalyzes the reversible conversion of 3-phosphohydroxypyruvate to phosphoserine and of 3-hydroxy-2-oxo-4-phosphonooxybutanoate to phosphohydroxythreonine. This chain is Phosphoserine aminotransferase, found in Salmonella choleraesuis (strain SC-B67).